The sequence spans 395 residues: Phosphopentomutase (395 aa).

Mn(2+) contacts are provided by Asp14, Asp286, His291, Asp327, His328, and His339.

It belongs to the phosphopentomutase family. The cofactor is Mn(2+).

The protein resides in the cytoplasm. The enzyme catalyses 2-deoxy-alpha-D-ribose 1-phosphate = 2-deoxy-D-ribose 5-phosphate. The catalysed reaction is alpha-D-ribose 1-phosphate = D-ribose 5-phosphate. It participates in carbohydrate degradation; 2-deoxy-D-ribose 1-phosphate degradation; D-glyceraldehyde 3-phosphate and acetaldehyde from 2-deoxy-alpha-D-ribose 1-phosphate: step 1/2. Isomerase that catalyzes the conversion of deoxy-ribose 1-phosphate (dRib-1-P) and ribose 1-phosphate (Rib-1-P) to deoxy-ribose 5-phosphate (dRib-5-P) and ribose 5-phosphate (Rib-5-P), respectively. The chain is Phosphopentomutase from Staphylococcus saprophyticus subsp. saprophyticus (strain ATCC 15305 / DSM 20229 / NCIMB 8711 / NCTC 7292 / S-41).